Reading from the N-terminus, the 101-residue chain is MIKSELVQRIAEHNPHLYQRDVENIVNAILDEIVDALARGDRVELRGFGAFSVKHRPARAGRNPRTGAHVPVDQKSVPFFKTGKEMRERLNREPGNTDTGA.

The protein belongs to the bacterial histone-like protein family. As to quaternary structure, heterodimer of an alpha and a beta chain.

Its function is as follows. This protein is one of the two subunits of integration host factor, a specific DNA-binding protein that functions in genetic recombination as well as in transcriptional and translational control. This Rhodopseudomonas palustris (strain BisB5) protein is Integration host factor subunit beta.